A 574-amino-acid polypeptide reads, in one-letter code: Septation ring formation regulator EzrA (574 aa).

Residues 1–7 (MSSGIIL) are Extracellular-facing. Residues 8–26 (LLVAIVLLVIIAYVVGVVI) traverse the membrane as a helical segment. The Cytoplasmic portion of the chain corresponds to 27–574 (RKRNDTLIAN…YEKTQERIRF (548 aa)). Coiled coils occupy residues 104–141 (VRAK…EEKN), 275–343 (LVSL…SAKY), and 473–525 (DIEA…VQKS).

It belongs to the EzrA family.

The protein resides in the cell membrane. In terms of biological role, negative regulator of FtsZ ring formation; modulates the frequency and position of FtsZ ring formation. Inhibits FtsZ ring formation at polar sites. Interacts either with FtsZ or with one of its binding partners to promote depolymerization. The polypeptide is Septation ring formation regulator EzrA (Streptococcus agalactiae serotype III (strain NEM316)).